We begin with the raw amino-acid sequence, 577 residues long: Protein CBFA2T1 (577 aa).

Positions Met1–Thr10 are enriched in basic and acidic residues. The tract at residues Met1–Leu87 is disordered. A Phosphoserine modification is found at Ser14. Residues Ser42–Ala59 show a composition bias toward polar residues. A compositionally biased stretch (low complexity) spans Asn68 to Leu87. The TAFH domain maps to Ala93–Glu188. The interval Ser203–Gln271 is disordered. Over residues Glu211 to Ser237 the composition is skewed to basic and acidic residues. Residues Ser244–Gln258 show a composition bias toward polar residues. Residues Leu262 to Gln271 show a composition bias toward pro residues. The tract at residues Gln310–Glu356 is important for oligomerization. The tract at residues Gln310–Glu356 is nervy homology region 2 (NHR2). Positions Asp374–Pro396 are disordered. The segment covering Ser380–Ser390 has biased composition (low complexity). A Phosphoserine modification is found at Ser390. Positions Glu416 to Glu465 are nervy homology region 3 (NHR3). Zn(2+) contacts are provided by Cys488, Cys491, Cys499, Cys502, Cys508, Cys512, His520, and Cys524. The segment at Cys488 to Cys524 adopts an MYND-type zinc-finger fold. The interval Gln529–Arg577 is disordered. 2 stretches are compositionally biased toward low complexity: residues Thr536–Met553 and Thr560–Arg577.

Belongs to the CBFA2T family. As to quaternary structure, homotetramer. Heterotetramer with CBFA2T2 and CBFA2T3. Interacts with TCF12, SIN3A, HDAC1, HDAC2, HDAC3, NCOR1 and NCOR2. Interacts with ATN1 (via its N-terminus); the interaction enhances the transcriptional repression.

It is found in the nucleus. Its function is as follows. Transcriptional corepressor which facilitates transcriptional repression via its association with DNA-binding transcription factors and recruitment of other corepressors and histone-modifying enzymes. Can repress the expression of MMP7 in a ZBTB33-dependent manner. Can repress transactivation mediated by TCF12. Acts as a negative regulator of adipogenesis. This chain is Protein CBFA2T1 (Runx1t1), found in Mus musculus (Mouse).